A 468-amino-acid chain; its full sequence is Glutamate--tRNA ligase (468 aa).

The 'HIGH' region motif lies at Pro8 to Gly18. Positions 97, 99, 124, and 126 each coordinate Zn(2+). The 'KMSKS' region motif lies at Lys236–Arg240. Lys239 provides a ligand contact to ATP.

This sequence belongs to the class-I aminoacyl-tRNA synthetase family. Glutamate--tRNA ligase type 1 subfamily. In terms of assembly, monomer. It depends on Zn(2+) as a cofactor.

The protein resides in the cytoplasm. The catalysed reaction is tRNA(Glu) + L-glutamate + ATP = L-glutamyl-tRNA(Glu) + AMP + diphosphate. In terms of biological role, catalyzes the attachment of glutamate to tRNA(Glu) in a two-step reaction: glutamate is first activated by ATP to form Glu-AMP and then transferred to the acceptor end of tRNA(Glu). The sequence is that of Glutamate--tRNA ligase from Francisella tularensis subsp. mediasiatica (strain FSC147).